A 682-amino-acid polypeptide reads, in one-letter code: ATP-dependent zinc metalloprotease FtsH (682 aa).

Over 1-7 (MKQSHKT) the chain is Cytoplasmic. The chain crosses the membrane as a helical span at residues 8–28 (ILLWALLIFLFVMIYNLISDG). At 29–138 (TSGEETLDTT…YEVKAKEEST (110 aa)) the chain is on the periplasmic side. The helical transmembrane segment at 139–159 (FWQSLLISWLPMLLLFALFFF) threads the bilayer. Over 160-682 (FMRQLQAGGG…SGTDPEPEPA (523 aa)) the chain is Cytoplasmic. 232–239 (GPPGTGKT) is a binding site for ATP. His454 serves as a coordination point for Zn(2+). Glu455 is a catalytic residue. Zn(2+) is bound by residues His458 and Asp531. Positions 638–682 (LSRPAVVSKPSADAESSVDEDEREARPALFPPLGKSGTDPEPEPA) are disordered.

The protein in the central section; belongs to the AAA ATPase family. It in the C-terminal section; belongs to the peptidase M41 family. Homohexamer. It depends on Zn(2+) as a cofactor.

Its subcellular location is the cell inner membrane. In terms of biological role, acts as a processive, ATP-dependent zinc metallopeptidase for both cytoplasmic and membrane proteins. Plays a role in the quality control of integral membrane proteins. The polypeptide is ATP-dependent zinc metalloprotease FtsH (Haliangium ochraceum (strain DSM 14365 / JCM 11303 / SMP-2)).